We begin with the raw amino-acid sequence, 316 residues long: Ribosomal RNA small subunit methyltransferase H (316 aa).

S-adenosyl-L-methionine-binding positions include 35 to 37 (GGH), Asp55, Phe79, Asp101, and Gln108.

This sequence belongs to the methyltransferase superfamily. RsmH family.

The protein resides in the cytoplasm. It catalyses the reaction cytidine(1402) in 16S rRNA + S-adenosyl-L-methionine = N(4)-methylcytidine(1402) in 16S rRNA + S-adenosyl-L-homocysteine + H(+). Its function is as follows. Specifically methylates the N4 position of cytidine in position 1402 (C1402) of 16S rRNA. This chain is Ribosomal RNA small subunit methyltransferase H, found in Aliivibrio fischeri (strain MJ11) (Vibrio fischeri).